Here is a 323-residue protein sequence, read N- to C-terminus: MIDFGNFYSLIAKNHLSHWLETLPAQIANWQREQQHGLFKQWSNAVEFLPEIKPYHLDLLHSVTAESEEPLSAGQIKRIETLMRNLMPWRKGPFSLYGVNIDTEWRSDWKWDRVLPHLSDLTGRTILDVGCGSGYHMWRMIGAGAHLAVGIDPTQLFLCQFEAVRKLLGNDQRAHLLPLGIEQLPALKAFDTVFSMGVLYHRRSPLEHLWQLKDQLVNEGELVLETLVIDGDENTVLVPGDRYAQMRNVYFIPSALALKNWLKKCGFVDIRIADVSVTTTEEQRRTEWMVTESLADFLDPHDPGKTVEGYPAPKRAVLIARKP.

Residues K91, W105, K110, G130, D152–T154, I181–E182, M196, Y200, and R315 contribute to the carboxy-S-adenosyl-L-methionine site.

It belongs to the class I-like SAM-binding methyltransferase superfamily. CmoB family. Homotetramer.

The enzyme catalyses carboxy-S-adenosyl-L-methionine + 5-hydroxyuridine(34) in tRNA = 5-carboxymethoxyuridine(34) in tRNA + S-adenosyl-L-homocysteine + H(+). Its function is as follows. Catalyzes carboxymethyl transfer from carboxy-S-adenosyl-L-methionine (Cx-SAM) to 5-hydroxyuridine (ho5U) to form 5-carboxymethoxyuridine (cmo5U) at position 34 in tRNAs. This chain is tRNA U34 carboxymethyltransferase, found in Escherichia coli O81 (strain ED1a).